Consider the following 224-residue polypeptide: Putative ankyrin repeat protein R845 (224 aa).

ANK repeat units lie at residues 1–14 (MVEY…DVRS), 15–44 (NYDH…DVSM), 46–74 (YDYI…DPRT), 75–104 (NNDK…DIRI), 105–134 (DNDS…DIRA), 136–164 (NDYS…DVRA), 165–194 (DNDY…DFRA), and 196–224 (NDCA…VCPY).

The chain is Putative ankyrin repeat protein R845 from Acanthamoeba polyphaga mimivirus (APMV).